A 184-amino-acid polypeptide reads, in one-letter code: Ethylene-responsive transcription factor ERF024 (184 aa).

Residues 1-21 (MQGTSKDNGGRHPLYRGVRQR) form a disordered region. Residues 14–72 (LYRGVRQRKNSNKWVSEIREPRKPNRIWLGTFSTPEMAAIAYDVAALALKGSQAELNFP) constitute a DNA-binding region (AP2/ERF).

The protein belongs to the AP2/ERF transcription factor family. ERF subfamily.

The protein localises to the nucleus. In terms of biological role, probably acts as a transcriptional activator. Binds to the GCC-box pathogenesis-related promoter element. May be involved in the regulation of gene expression by stress factors and by components of stress signal transduction pathways. The polypeptide is Ethylene-responsive transcription factor ERF024 (ERF024) (Arabidopsis thaliana (Mouse-ear cress)).